Consider the following 118-residue polypeptide: NADH-ubiquinone oxidoreductase chain 3 (118 aa).

The next 3 helical transmembrane spans lie at 1–21 (MLFF…VLVF), 59–79 (YTYF…SLLL), and 86–106 (VLYK…IGFL).

It belongs to the complex I subunit 3 family.

The protein localises to the mitochondrion membrane. It carries out the reaction a ubiquinone + NADH + 5 H(+)(in) = a ubiquinol + NAD(+) + 4 H(+)(out). Functionally, core subunit of the mitochondrial membrane respiratory chain NADH dehydrogenase (Complex I) that is believed to belong to the minimal assembly required for catalysis. Complex I functions in the transfer of electrons from NADH to the respiratory chain. The immediate electron acceptor for the enzyme is believed to be ubiquinone. This is NADH-ubiquinone oxidoreductase chain 3 (ND3) from Fasciola hepatica (Liver fluke).